A 479-amino-acid polypeptide reads, in one-letter code: PTS system MurNAc-GlcNAc-specific EIIBC component (479 aa).

In terms of domain architecture, PTS EIIB type-1 spans 5-87; sequence QILAEHIIDA…SELSGAPLGE (83 aa). Residue Cys27 is the Phosphocysteine intermediate; for EIIB activity of the active site. In terms of domain architecture, PTS EIIC type-1 spans 125–479; the sequence is KTIANIFIPL…AMRESDTLGD (355 aa). 10 consecutive transmembrane segments (helical) span residues 130–150, 169–189, 195–215, 229–249, 269–289, 303–323, 344–364, 379–399, 403–423, and 445–465; these read IFIP…IAAV, VTVF…FTGI, FGAT…TGLT, LQPG…LSII, ITLF…AGFV, IGGV…VMLG, LLPI…ALWV, ALPV…TLPL, FITA…IGHI, and LGYI…TYFF.

It is found in the cell membrane. The catalysed reaction is N-acetyl-beta-D-muramate-(1-&gt;4)-N-acetyl-D-glucosamine(out) + N(pros)-phospho-L-histidyl-[protein] = 6-phospho-N-acetyl-beta-D-muramate-(1-&gt;4)-N-acetyl-D-glucosamine(in) + L-histidyl-[protein]. The protein operates within cell wall biogenesis; peptidoglycan recycling. Functionally, the phosphoenolpyruvate-dependent sugar phosphotransferase system (sugar PTS), a major carbohydrate active transport system, catalyzes the phosphorylation of incoming sugar substrates concomitantly with their translocation across the cell membrane. This system is involved in the uptake and phosphorylation of MurNAc-GlcNAc, the principle peptidoglycan turnover product of S.aureus, yielding cytoplasmic MurNAc 6P-GlcNAc. The protein is PTS system MurNAc-GlcNAc-specific EIIBC component of Staphylococcus saprophyticus subsp. saprophyticus (strain ATCC 15305 / DSM 20229 / NCIMB 8711 / NCTC 7292 / S-41).